A 474-amino-acid polypeptide reads, in one-letter code: Glutamine synthetase (474 aa).

Residues 14–99 (EKIELIDLKF…VCSIKEPRTG (86 aa)) form the GS beta-grasp domain. In terms of domain architecture, GS catalytic spans 106–474 (PRVIAQKAID…PYEFSIYYDV (369 aa)). 2 residues coordinate Mg(2+): Glu-131 and Glu-133. Glu-211 provides a ligand contact to ATP. Mg(2+) is bound by residues Glu-216 and Glu-224. L-glutamate-binding positions include 268–269 (NG) and Gly-269. His-273 provides a ligand contact to Mg(2+). Residues 275–277 (HQS) and Ser-277 contribute to the ATP site. Positions 325, 331, and 343 each coordinate L-glutamate. Arg-343, Arg-348, and Lys-357 together coordinate ATP. Residue Glu-362 participates in Mg(2+) binding. Arg-364 is a binding site for L-glutamate. The residue at position 402 (Tyr-402) is an O-AMP-tyrosine.

It belongs to the glutamine synthetase family. As to quaternary structure, oligomer of 12 subunits arranged in the form of two hexagons. It depends on Mg(2+) as a cofactor.

It localises to the cytoplasm. The enzyme catalyses L-glutamate + NH4(+) + ATP = L-glutamine + ADP + phosphate + H(+). With respect to regulation, the activity of this enzyme could be controlled by adenylation under conditions of abundant glutamine. Involved in nitrogen metabolism via ammonium assimilation. Catalyzes the ATP-dependent biosynthesis of glutamine from glutamate and ammonia. The sequence is that of Glutamine synthetase from Nostoc sp. (strain PCC 7120 / SAG 25.82 / UTEX 2576).